Reading from the N-terminus, the 717-residue chain is uncharacterized protein (717 aa).

This sequence belongs to the asfivirus C717R family.

It localises to the virion. This is an uncharacterized protein from Ornithodoros (relapsing fever ticks).